A 106-amino-acid polypeptide reads, in one-letter code: Secreted RxLR effector protein 18 (106 aa).

Positions 1-17 are cleaved as a signal peptide; sequence MRGSTAMLLAAIALFSS. A RxLR-dEER motif is present at residues 28–39; that stretch reads RTLRSFEELEER.

It belongs to the RxLR effector family.

The protein localises to the secreted. Its subcellular location is the host cell. Its function is as follows. Effector that may act as a suppressor of cell death to interrupt plant immunity. I. The polypeptide is Secreted RxLR effector protein 18 (Plasmopara viticola (Downy mildew of grapevine)).